Consider the following 62-residue polypeptide: 6.7 kDa chloroplast outer envelope membrane protein (62 aa).

Over 1 to 17 (MESVAKPATTKEGSAKQ) the chain is Chloroplast intermembrane. A helical membrane pass occupies residues 18-40 (AAIVVGVLALGWFAIQVAFIPLF). Over 41-62 (NKVRGGGSDKKDDDVNAFTPDT) the chain is Cytoplasmic.

The protein resides in the plastid. Its subcellular location is the chloroplast outer membrane. This is 6.7 kDa chloroplast outer envelope membrane protein from Spinacia oleracea (Spinach).